The sequence spans 550 residues: NAD(P)H-quinone oxidoreductase chain 4 3 (550 aa).

The next 14 membrane-spanning stretches (helical) occupy residues 5–25 (FPWL…IPLL), 36–56 (YALI…WQHF), 86–106 (ISAP…FSAW), 114–134 (LFYA…VAKD), 135–155 (LFLF…LVCI), 168–188 (FLLY…ALSL), 212–232 (MWLY…FPLH), 243–263 (SSPV…YGLM), 277–297 (FAPL…FSSF), 311–331 (VSHM…GING), 332–352 (AMLQ…LAGV), 375–395 (VFAM…MSGF), 418–438 (ITVF…LSML), and 489–509 (IFIA…PKLL).

The protein belongs to the complex I subunit 4 family.

The protein localises to the cellular thylakoid membrane. The enzyme catalyses a plastoquinone + NADH + (n+1) H(+)(in) = a plastoquinol + NAD(+) + n H(+)(out). It carries out the reaction a plastoquinone + NADPH + (n+1) H(+)(in) = a plastoquinol + NADP(+) + n H(+)(out). In terms of biological role, NDH-1 shuttles electrons from NAD(P)H, via FMN and iron-sulfur (Fe-S) centers, to quinones in the respiratory chain. The immediate electron acceptor for the enzyme in this species is believed to be plastoquinone. Couples the redox reaction to proton translocation (for every two electrons transferred, four hydrogen ions are translocated across the cytoplasmic membrane), and thus conserves the redox energy in a proton gradient. The sequence is that of NAD(P)H-quinone oxidoreductase chain 4 3 from Picosynechococcus sp. (strain ATCC 27264 / PCC 7002 / PR-6) (Agmenellum quadruplicatum).